Consider the following 398-residue polypeptide: uncharacterized protein (398 aa).

This is an uncharacterized protein from Neisseria meningitidis serogroup B (strain ATCC BAA-335 / MC58).